A 584-amino-acid polypeptide reads, in one-letter code: Eukaryotic translation initiation factor 3 subunit D (584 aa).

The tract at residues 118–184 (IFTRGRGQRG…KDYDKPQRNR (67 aa)) is disordered. The span at 127 to 167 (GRGGQDTRGGGRQQFQRGGRGGQQYGGGGYSDRGGGRGGGA) shows a compositional bias: gly residues. Residues 173-184 (GWKDYDKPQRNR) are compositionally biased toward basic and acidic residues. The interval 312 to 326 (ALDMVTVNENAADAP) is RNA gate. Residues 563-584 (PANGLDDDDEGPEPEGVAEEED) form a disordered region. Positions 567–584 (LDDDDEGPEPEGVAEEED) are enriched in acidic residues.

Belongs to the eIF-3 subunit D family. As to quaternary structure, component of the eukaryotic translation initiation factor 3 (eIF-3) complex.

The protein resides in the cytoplasm. MRNA cap-binding component of the eukaryotic translation initiation factor 3 (eIF-3) complex, which is involved in protein synthesis of a specialized repertoire of mRNAs and, together with other initiation factors, stimulates binding of mRNA and methionyl-tRNAi to the 40S ribosome. The eIF-3 complex specifically targets and initiates translation of a subset of mRNAs involved in cell proliferation. In the eIF-3 complex, eif3d specifically recognizes and binds the 7-methylguanosine cap of a subset of mRNAs. In Chaetomium globosum (strain ATCC 6205 / CBS 148.51 / DSM 1962 / NBRC 6347 / NRRL 1970) (Soil fungus), this protein is Eukaryotic translation initiation factor 3 subunit D.